A 261-amino-acid chain; its full sequence is Ribosomal RNA small subunit methyltransferase J (261 aa).

Residues 111–112, 127–128, 163–164, and Asp-181 contribute to the S-adenosyl-L-methionine site; these read RD, ER, and SS.

This sequence belongs to the methyltransferase superfamily. RsmJ family.

Its subcellular location is the cytoplasm. The enzyme catalyses guanosine(1516) in 16S rRNA + S-adenosyl-L-methionine = N(2)-methylguanosine(1516) in 16S rRNA + S-adenosyl-L-homocysteine + H(+). Its function is as follows. Specifically methylates the guanosine in position 1516 of 16S rRNA. This chain is Ribosomal RNA small subunit methyltransferase J, found in Shewanella sp. (strain MR-7).